Consider the following 156-residue polypeptide: MPLPLQPMPEPLIKPLADAAPGENPVHVAANLQTFLALDFGLKRTGFAVGNRLLRTAQPQGTIAAEGDARFVKIALQLKEWQPDALVVGVPFHPDGAAHENTLRARRFARQLQGRFKLPVFEVDERYTTTEALGRGARDADAMAACIILEQFLRSI.

Belongs to the YqgF nuclease family.

It is found in the cytoplasm. Functionally, could be a nuclease involved in processing of the 5'-end of pre-16S rRNA. This Albidiferax ferrireducens (strain ATCC BAA-621 / DSM 15236 / T118) (Rhodoferax ferrireducens) protein is Putative pre-16S rRNA nuclease.